Consider the following 334-residue polypeptide: Glycerol-1-phosphate dehydrogenase [NAD(P)+] (334 aa).

Residues 77 to 81 (GRPID) and 99 to 102 (TTAS) contribute to the NAD(+) site. Aspartate 104 contributes to the substrate binding site. Serine 108 is a binding site for NAD(+). Position 147 (aspartate 147) interacts with substrate. Zn(2+)-binding residues include aspartate 147 and histidine 225. Histidine 229 contacts substrate. Position 246 (histidine 246) interacts with Zn(2+).

Belongs to the glycerol-1-phosphate dehydrogenase family. Requires Zn(2+) as cofactor.

Its subcellular location is the cytoplasm. It catalyses the reaction sn-glycerol 1-phosphate + NAD(+) = dihydroxyacetone phosphate + NADH + H(+). It carries out the reaction sn-glycerol 1-phosphate + NADP(+) = dihydroxyacetone phosphate + NADPH + H(+). It participates in membrane lipid metabolism; glycerophospholipid metabolism. Catalyzes the NAD(P)H-dependent reduction of dihydroxyacetonephosphate (DHAP or glycerone phosphate) to glycerol 1-phosphate (G1P). The G1P thus generated is used as the glycerophosphate backbone of phospholipids in the cellular membranes of Archaea. The sequence is that of Glycerol-1-phosphate dehydrogenase [NAD(P)+] from Methanococcus maripaludis (strain C6 / ATCC BAA-1332).